Here is a 601-residue protein sequence, read N- to C-terminus: Glutathione-regulated potassium-efflux system protein KefB (601 aa).

13 consecutive transmembrane segments (helical) span residues 4–24 (SDFL…VPLA), 29–49 (IGAV…GLGF), 55–75 (EILH…GLEL), 87–107 (IFGV…GLLM), 115–135 (AAVV…LQLM), 152–172 (VLLF…LLAG), 177–197 (HFDW…LIGG), 207–227 (FIAA…LVLG), 230–250 (LFMD…GVLL), 268–288 (GLLL…GVLY), 291–311 (LLWV…VLYL), 324–344 (MQFA…FSSA), and 356–376 (ALLL…MKLV). The region spanning 400-519 (KPQVIVVGFG…AGVTQFSRET (120 aa)) is the RCK N-terminal domain.

This sequence belongs to the monovalent cation:proton antiporter 2 (CPA2) transporter (TC 2.A.37) family. KefB subfamily. Interacts with the regulatory subunit KefG.

It localises to the cell inner membrane. Pore-forming subunit of a potassium efflux system that confers protection against electrophiles. Catalyzes K(+)/H(+) antiport. This is Glutathione-regulated potassium-efflux system protein KefB from Escherichia coli O127:H6 (strain E2348/69 / EPEC).